Here is a 207-residue protein sequence, read N- to C-terminus: Ribosomal RNA large subunit methyltransferase E (207 aa).

S-adenosyl-L-methionine contacts are provided by Gly51, Trp53, Asp69, Asp85, and Asp108. Lys148 (proton acceptor) is an active-site residue.

Belongs to the class I-like SAM-binding methyltransferase superfamily. RNA methyltransferase RlmE family.

It localises to the cytoplasm. It carries out the reaction uridine(2552) in 23S rRNA + S-adenosyl-L-methionine = 2'-O-methyluridine(2552) in 23S rRNA + S-adenosyl-L-homocysteine + H(+). Functionally, specifically methylates the uridine in position 2552 of 23S rRNA at the 2'-O position of the ribose in the fully assembled 50S ribosomal subunit. In Methanospirillum hungatei JF-1 (strain ATCC 27890 / DSM 864 / NBRC 100397 / JF-1), this protein is Ribosomal RNA large subunit methyltransferase E.